We begin with the raw amino-acid sequence, 432 residues long: Enolase (432 aa).

Gln164 serves as a coordination point for (2R)-2-phosphoglycerate. The Proton donor role is filled by Glu206. Asp243, Glu289, and Asp316 together coordinate Mg(2+). Positions 341, 370, 371, and 392 each coordinate (2R)-2-phosphoglycerate. The active-site Proton acceptor is Lys341.

Belongs to the enolase family. Requires Mg(2+) as cofactor.

The protein localises to the cytoplasm. It localises to the secreted. Its subcellular location is the cell surface. The enzyme catalyses (2R)-2-phosphoglycerate = phosphoenolpyruvate + H2O. It participates in carbohydrate degradation; glycolysis; pyruvate from D-glyceraldehyde 3-phosphate: step 4/5. Functionally, catalyzes the reversible conversion of 2-phosphoglycerate (2-PG) into phosphoenolpyruvate (PEP). It is essential for the degradation of carbohydrates via glycolysis. The chain is Enolase from Borrelia duttonii (strain Ly).